The chain runs to 706 residues: Translation factor GUF1 homolog, mitochondrial (706 aa).

The region spanning 89–272 (SRIRNFSIIA…SIVKNVPPPQ (184 aa)) is the tr-type G domain. Residues 98 to 105 (AHIDHGKS), 165 to 169 (DTPGH), and 219 to 222 (NKID) contribute to the GTP site.

It belongs to the TRAFAC class translation factor GTPase superfamily. Classic translation factor GTPase family. LepA subfamily.

It localises to the mitochondrion inner membrane. The catalysed reaction is GTP + H2O = GDP + phosphate + H(+). Functionally, promotes mitochondrial protein synthesis. May act as a fidelity factor of the translation reaction, by catalyzing a one-codon backward translocation of tRNAs on improperly translocated ribosomes. Binds to mitochondrial ribosomes in a GTP-dependent manner. This chain is Translation factor GUF1 homolog, mitochondrial, found in Thalassiosira pseudonana (Marine diatom).